Consider the following 341-residue polypeptide: Endolysin (341 aa).

One can recognise an N-acetylmuramoyl-L-alanine amidase domain in the interval 23–153; it reads NFVIAHETAN…LGGTTHQDPY (131 aa). Disordered regions lie at residues 175-201 and 248-267; these read GGGN…TNLD and KGGA…STAK.

The protein belongs to the N-acetylmuramoyl-L-alanine amidase 2 family.

Its subcellular location is the secreted. The catalysed reaction is Hydrolyzes the link between N-acetylmuramoyl residues and L-amino acid residues in certain cell-wall glycopeptides.. This chain is Endolysin (PLY511), found in Listeria phage A511 (Bacteriophage A511).